We begin with the raw amino-acid sequence, 358 residues long: Programmed cell death protein 2-like (358 aa).

A2 carries the post-translational modification N-acetylalanine. At S20 the chain carries Phosphoserine. Position 22 is a phosphothreonine (T22).

In terms of tissue distribution, higher expression in lung, colon, mammary gland, cervix, stomach and small intestine.

Functionally, over-expression suppresses AP1, CREB, NFAT, and NF-kB transcriptional activation, and delays cell cycle progression at S phase. The sequence is that of Programmed cell death protein 2-like (PDCD2L) from Homo sapiens (Human).